Here is a 507-residue protein sequence, read N- to C-terminus: Cystathionine beta-synthase (507 aa).

Lys53 is subject to N6-(pyridoxal phosphate)lysine. Asn84 is a pyridoxal 5'-phosphate binding site. A Phosphoserine modification is found at Ser134. Pyridoxal 5'-phosphate is bound by residues 196-200 (GTGGT) and Ser289. Phosphoserine is present on residues Ser350 and Ser424. The 60-residue stretch at 373–432 (HLKPVVSVKETAKVTDVIKILKDNGFDQLPVLTEDGKLSGLVTLSELLRKLSINNSNNDN) folds into the CBS domain.

Belongs to the cysteine synthase/cystathionine beta-synthase family. Requires pyridoxal 5'-phosphate as cofactor.

It catalyses the reaction L-homocysteine + L-serine = L,L-cystathionine + H2O. It participates in amino-acid biosynthesis; L-cysteine biosynthesis; L-cysteine from L-homocysteine and L-serine: step 1/2. In Saccharomyces cerevisiae (strain ATCC 204508 / S288c) (Baker's yeast), this protein is Cystathionine beta-synthase (CYS4).